A 77-amino-acid polypeptide reads, in one-letter code: U8-lycotoxin-Ls1d (77 aa).

The N-terminal stretch at 1–20 is a signal peptide; it reads MKLIIFTGLVLFAIVSLIEA. Residues 21 to 26 constitute a propeptide that is removed on maturation; it reads QAENEK.

This sequence belongs to the neurotoxin 19 (CSTX) family. 08 (U8-Lctx) subfamily. In terms of processing, contains 4 disulfide bonds. Expressed by the venom gland.

The protein localises to the secreted. The sequence is that of U8-lycotoxin-Ls1d from Lycosa singoriensis (Wolf spider).